The chain runs to 247 residues: C-type lectin domain family 7 member A (247 aa).

Residues 1–44 lie on the Cytoplasmic side of the membrane; sequence MEYHPDLENLDEDGYTQLHFDSQSNTRIAVVSEKGSCAASPPWR. The short motif at 15–18 is the ITAM-like element; that stretch reads YTQL. Residues 45-65 traverse the membrane as a helical; Signal-anchor for type II membrane protein segment; that stretch reads LIAVILGILCLVILVIAVVLG. Residues 66–247 lie on the Extracellular side of the membrane; sequence TMAIWRSNSG…YSICEKKFSM (182 aa). An N-linked (GlcNAc...) asparagine glycan is attached at N91. 3 disulfide bridges follow: C120–C131, C148–C241, and C220–C233. In terms of domain architecture, C-type lectin spans 127–242; that stretch reads YEKSCYLFSM…CSVPSYSICE (116 aa). 146–153 contributes to the (1,3-beta-D-glucosyl)n binding site; the sequence is RQCWQLGS. A divalent metal cation is bound by residues K157, D159, and E163. (1,3-beta-D-glucosyl)n is bound at residue E195. E242 is a binding site for a divalent metal cation.

In terms of assembly, homodimer. Interacts with SYK; participates in leukocyte activation in presence of fungal pathogens. Interacts with CD37; this interaction controls CLEC7A-mediated IL-6 production. As to quaternary structure, interacts with RANBP9. Post-translationally, phosphorylated on tyrosine residues in response to beta-glucan binding. Highly expressed in peripheral blood leukocytes and dendritic cells. Detected in spleen, bone marrow, lung, muscle, stomach and placenta.

Its subcellular location is the cell membrane. The protein localises to the cytoplasm. Its function is as follows. Lectin that functions as a pattern recognizing receptor (PRR) specific for beta-1,3-linked and beta-1,6-linked glucans, which constitute cell wall constituents from pathogenic bacteria and fungi. Necessary for the TLR2-mediated inflammatory response and activation of NF-kappa-B: upon beta-glucan binding, recruits SYK via its ITAM motif and promotes a signaling cascade that activates some CARD domain-BCL10-MALT1 (CBM) signalosomes, leading to the activation of NF-kappa-B and MAP kinase p38 (MAPK11, MAPK12, MAPK13 and/or MAPK14) pathways which stimulate expression of genes encoding pro-inflammatory cytokines and chemokines. Enhances cytokine production in macrophages and dendritic cells. Mediates production of reactive oxygen species in the cell. Mediates phagocytosis of C.albicans conidia. Binds T-cells in a way that does not involve their surface glycans and plays a role in T-cell activation. Stimulates T-cell proliferation. Induces phosphorylation of SCIMP after binding beta-glucans. The chain is C-type lectin domain family 7 member A from Homo sapiens (Human).